The following is a 540-amino-acid chain: Terminase large subunit (540 aa).

Mn(2+)-binding residues include Asp-352, Asp-424, and Asp-523.

It belongs to the skunavirus terminase large subunit family. In terms of assembly, interacts with the terminase small subunit; the active complex is probably heterooligomeric. Requires Mn(2+) as cofactor. It depends on Mg(2+) as a cofactor.

Probable terminase large subunit. The terminase large subunit acts as an ATP driven molecular motor necessary for viral DNA translocation into empty capsids and as an endonuclease that cuts the viral genome to initiate and to end a packaging reaction. The terminase lies at a unique vertex of the procapsid and is composed of two subunits, a small terminase subunit involved in viral DNA recognition (packaging sequence), and a large terminase subunit possessing endonucleolytic and ATPase activities. Both terminase subunits heterooligomerize and are docked on the portal protein to form the packaging machine. The terminase large subunit exhibits endonuclease activity and cleaves the viral genome concatemer. The chain is Terminase large subunit from Lactococcus lactis (Lactococcus lactis bacteriophage p2).